Consider the following 348-residue polypeptide: Quinone oxidoreductase-like protein 1 (348 aa).

It belongs to the zinc-containing alcohol dehydrogenase family. Quinone oxidoreductase subfamily. In terms of assembly, component of the FERRY complex composed of five subunits, TBCK, PPP1R21, FERRY3, CRYZL1 and GATD1 with a ratio of 1:2:1:2:4, respectively.

The protein resides in the early endosome. Its function is as follows. Component of the FERRY complex (Five-subunit Endosomal Rab5 and RNA/ribosome intermediary). The FERRY complex directly interacts with mRNAs and RAB5A, and functions as a RAB5A effector involved in the localization and the distribution of specific mRNAs most likely by mediating their endosomal transport. The complex recruits mRNAs and ribosomes to early endosomes through direct mRNA-interaction. The sequence is that of Quinone oxidoreductase-like protein 1 (Cryzl1) from Mus musculus (Mouse).